The primary structure comprises 1362 residues: DNA-directed RNA polymerase subunit beta'' (1362 aa).

Zn(2+) is bound by residues Cys-224, Cys-295, Cys-302, and Cys-305.

It belongs to the RNA polymerase beta' chain family. RpoC2 subfamily. In terms of assembly, in plastids the minimal PEP RNA polymerase catalytic core is composed of four subunits: alpha, beta, beta', and beta''. When a (nuclear-encoded) sigma factor is associated with the core the holoenzyme is formed, which can initiate transcription. It depends on Zn(2+) as a cofactor.

The protein localises to the plastid. The protein resides in the chloroplast. It catalyses the reaction RNA(n) + a ribonucleoside 5'-triphosphate = RNA(n+1) + diphosphate. In terms of biological role, DNA-dependent RNA polymerase catalyzes the transcription of DNA into RNA using the four ribonucleoside triphosphates as substrates. This Helianthus annuus (Common sunflower) protein is DNA-directed RNA polymerase subunit beta''.